The chain runs to 98 residues: MMKRLIPTFNRILVQGVIQPAKTESGILLPEKASKLNSGKVIAVGPGSRDKDGKLIPVSVKEGDTVLLPEYGGTQVKLGEKEYHLFRDEDVLGTLHED.

The protein belongs to the GroES chaperonin family. In terms of assembly, forms stable complexes with CPN60 in the presence of ATP.

Its subcellular location is the cytoplasm. Seems to function only as a co-chaperone, along with cpn60, and in certain cases is essential for the discharge of biologically active proteins from cpn60. This Brassica napus (Rape) protein is 10 kDa chaperonin.